We begin with the raw amino-acid sequence, 325 residues long: Tetraacyldisaccharide 4'-kinase (325 aa).

55 to 62 is an ATP binding site; sequence TAGGNGKT.

This sequence belongs to the LpxK family.

The catalysed reaction is a lipid A disaccharide + ATP = a lipid IVA + ADP + H(+). It functions in the pathway glycolipid biosynthesis; lipid IV(A) biosynthesis; lipid IV(A) from (3R)-3-hydroxytetradecanoyl-[acyl-carrier-protein] and UDP-N-acetyl-alpha-D-glucosamine: step 6/6. In terms of biological role, transfers the gamma-phosphate of ATP to the 4'-position of a tetraacyldisaccharide 1-phosphate intermediate (termed DS-1-P) to form tetraacyldisaccharide 1,4'-bis-phosphate (lipid IVA). The chain is Tetraacyldisaccharide 4'-kinase from Salmonella paratyphi A (strain ATCC 9150 / SARB42).